The chain runs to 102 residues: Spexin prohormone 1 (102 aa).

The N-terminal stretch at 1 to 26 (MKDLRTLAAYALALLLLATFVSHSWS) is a signal peptide. The propeptide occupies 27 to 35 (APKGSFQRR). Residue glutamine 49 is modified to Glutamine amide. A propeptide spanning residues 50 to 102 (GRRFVSEDRNEGDLYDTIRLESRSQNTENLSISKAAAFLLNILQQARDEDEPY) is cleaved from the precursor.

This sequence belongs to the spexin family. As to expression, mainly expressed in the brain and ovary. Detected bilaterally in the adult brainstem. Expressed in neurons in the dorsal habenula (dHb). In the dHb some neurons project into the interpeduncular nucleus (IPN) where expression often overlaps with galr2a and galr2b. Weakly expressed in the liver, intestine, kidney, heart and gill.

It is found in the secreted. Its subcellular location is the extracellular space. It localises to the cytoplasmic vesicle. The protein localises to the secretory vesicle. Its function is as follows. Plays a role in the regulation of food intake and energy metabolism. May also be involved in suppressing the anxiety response by promoting the expression of serotonin-related genes such as fev, tph2 and slc6a4a. In terms of biological role, acts as a ligand for galanin receptors galr2a and galr2b. Brain administration of the peptide inhibits food consumption and elevates levels of glucose, triacylglycerol and cholesterol in the serum. Likely to control food intake by regulating appetite related genes which includes the negative regulation of the orexigenic factor agrp. By controlling food intake it may act as a satiety factor in energy metabolism. The polypeptide is Spexin prohormone 1 (spx) (Danio rerio (Zebrafish)).